Consider the following 568-residue polypeptide: DNA ligase 2 (568 aa).

Glutamate 254 provides a ligand contact to ATP. Lysine 256 (N6-AMP-lysine intermediate) is an active-site residue. Residues arginine 261, arginine 276, glutamate 306, phenylalanine 346, arginine 425, and lysine 431 each coordinate ATP.

The protein belongs to the ATP-dependent DNA ligase family. Mg(2+) is required as a cofactor.

The enzyme catalyses ATP + (deoxyribonucleotide)n-3'-hydroxyl + 5'-phospho-(deoxyribonucleotide)m = (deoxyribonucleotide)n+m + AMP + diphosphate.. Functionally, DNA ligase that seals nicks in double-stranded DNA during DNA replication, DNA recombination and DNA repair. The protein is DNA ligase 2 of Methanosarcina acetivorans (strain ATCC 35395 / DSM 2834 / JCM 12185 / C2A).